We begin with the raw amino-acid sequence, 350 residues long: Chlorophyll a/b light-harvesting protein PcbA (350 aa).

6 consecutive transmembrane segments (helical) span residues 26–46 (LSAH…ITLF), 62–82 (LILI…GQVV), 87–107 (YFVI…GALY), 214–234 (IAVV…FPWA), 248–268 (LSAS…FSAV), and 309–329 (LCNV…WHAL).

It belongs to the PsbB/PsbC family. IsiA/Pcb subfamily. In terms of assembly, the antenna complex consists of chlorophylls (a and b) and chlorophyll a/b binding proteins. Chlorophyll a is required as a cofactor. Requires chlorophyll b as cofactor.

The protein resides in the cellular thylakoid membrane. The antenna complex functions as a light receptor, it captures and delivers excitation energy to photosystems II and I. The Prochlorales pcb genes are not related to higher plant LHCs. The polypeptide is Chlorophyll a/b light-harvesting protein PcbA (pcbA) (Prochlorothrix hollandica).